The primary structure comprises 172 residues: Probable tryptophan transport protein (172 aa).

A run of 4 helical transmembrane segments spans residues 7–29 (VIMA…FLGG), 49–71 (VQNV…AFPA), 104–126 (AVLT…LLIV), and 136–158 (FAAV…YPIV).

The protein belongs to the vitamin uptake transporter (VUT/ECF) (TC 2.A.88) family. TrpP subfamily.

It is found in the cell membrane. In terms of biological role, probably involved in tryptophan uptake. The protein is Probable tryptophan transport protein (trpP) of Bacillus subtilis (strain 168).